Here is a 194-residue protein sequence, read N- to C-terminus: Imidazoleglycerol-phosphate dehydratase (194 aa).

This sequence belongs to the imidazoleglycerol-phosphate dehydratase family.

Its subcellular location is the cytoplasm. The catalysed reaction is D-erythro-1-(imidazol-4-yl)glycerol 3-phosphate = 3-(imidazol-4-yl)-2-oxopropyl phosphate + H2O. The protein operates within amino-acid biosynthesis; L-histidine biosynthesis; L-histidine from 5-phospho-alpha-D-ribose 1-diphosphate: step 6/9. This Lacticaseibacillus casei (strain BL23) (Lactobacillus casei) protein is Imidazoleglycerol-phosphate dehydratase.